We begin with the raw amino-acid sequence, 278 residues long: Undecaprenyl-diphosphatase (278 aa).

6 consecutive transmembrane segments (helical) span residues 44–64 (FLEM…MTIY), 84–104 (WQLW…AVPL), 112–132 (FNFM…FIWI), 187–207 (SVAA…YSGL), 224–244 (VWIL…VIRF), and 254–274 (FTVF…YAFI).

This sequence belongs to the UppP family.

The protein localises to the cell membrane. The enzyme catalyses di-trans,octa-cis-undecaprenyl diphosphate + H2O = di-trans,octa-cis-undecaprenyl phosphate + phosphate + H(+). Functionally, catalyzes the dephosphorylation of undecaprenyl diphosphate (UPP). Confers resistance to bacitracin. This is Undecaprenyl-diphosphatase from Streptococcus suis (strain 98HAH33).